The primary structure comprises 215 residues: MSKPPPKPVKPGQVKVFRALYTFEPRTPDELYFEEGDIIYITDMSDTSWWKGTCKGRTGLIPSNYVAEQAESIDNPLHEAAKRGNLSWLRECLDNRVGVNGLDKAGSTALYWACHGGHKDIVEVLFTQPNVELNQQNKLGDTALHAAAWKGYADIVQLLLAKGARTDLRNNEKKLALDMATNAACASLLKKKQQGTDGARTLSNAEDYLDDEDSD.

Position 2 is an N-acetylserine (S2). An SH3 domain is found at 12–71; the sequence is GQVKVFRALYTFEPRTPDELYFEEGDIIYITDMSDTSWWKGTCKGRTGLIPSNYVAEQAE. ANK repeat units lie at residues 72 to 101, 105 to 135, and 139 to 168; these read SIDNPLHEAAKRGNLSWLRECLDNRVGVNG, AGSTALYWACHGGHKDIVEVLFTQPNVELNQ, and LGDTALHAAAWKGYADIVQLLLAKGARTDL. Residues 192–215 form a disordered region; it reads KQQGTDGARTLSNAEDYLDDEDSD. T201 is modified (phosphothreonine). A phosphoserine mark is found at S203 and S214.

As to quaternary structure, interacts with C-SRC and SMN1. Interacts with FASLG.

Its subcellular location is the cytoplasm. Induces bone resorption, acting probably through a signaling cascade which results in the secretion of factor(s) enhancing osteoclast formation and activity. The polypeptide is Osteoclast-stimulating factor 1 (Ostf1) (Mus musculus (Mouse)).